Here is a 494-residue protein sequence, read N- to C-terminus: Caspase-8 (494 aa).

The propeptide occupies 1 to 242; the sequence is MAGSNLLIHL…QEIESDNQQS (242 aa). Active-site residues include histidine 345 and cysteine 386. Residues 401 to 410 constitute a propeptide that is removed on maturation; sequence RIDVTTVSPD.

It belongs to the peptidase C14A family. In terms of assembly, heterotetramer that consists of two anti-parallel arranged heterodimers, each one formed by a 15 kDa (caspase-8 subunit p15) and a 10 kDa (caspase-8 subunit p10) subunit. Interacts (via N-terminus) with Diap2; likely to bind Diap2 simultaneously with Fadd to form a trimeric complex. Interacts with Dark (via N-terminus). Post-translationally, polyubiquitinated by Diap2 following activation of the immune deficiency (Imd) pathway. In terms of tissue distribution, constitutively expressed in fat bodies of larvae and adults.

The protein localises to the cytoplasm. The enzyme catalyses Strict requirement for Asp at position P1 and has a preferred cleavage sequence of (Leu/Asp/Val)-Glu-Thr-Asp-|-(Gly/Ser/Ala).. In terms of biological role, effector of the programmed cell death (PCD) activators rpr, grim and hid. May play an apoptotic role in the germline as well as soma. Fadd interacts with Dredd to promote cleavage of Dredd and is necessary and sufficient for enhancing Dredd-induced apoptosis. Plays a role in the innate immune response. Required for resistance to Gram-negative bacterial infection. Diap2-mediated ubiquitination of Dredd is critical for processing of imd and rel and the subsequent expression of antimicrobial genes such as DptA. In Drosophila melanogaster (Fruit fly), this protein is Caspase-8.